The primary structure comprises 299 residues: Hemolysin C homolog (299 aa).

2 CBS domains span residues 80-142 and 145-202; these read MVPR…NGRL and LIRK…IDDE.

It belongs to the UPF0053 family. Hemolysin C subfamily.

The polypeptide is Hemolysin C homolog (tlyC) (Rickettsia rickettsii (strain Sheila Smith)).